The following is a 210-amino-acid chain: MRLIVGLGNPGQRYARNRHNIGFMAVDEIARVHRAAPFRRRFQGEAAEVMLGSERAILLKPQTFMNESGRSVGEAQRFFKIPLSDVIVLHDELDLAPAKLRVKLGGGNAGHNGLRSITALCGNDYRRVRLGIGHPGDKALVHAYVLNDFAKSEEPWVEDLCRATADHAPLLAAGEDASFQNKVHLAMAGRGWDAVKTPAEAGKAKARDAN.

Y14 provides a ligand contact to tRNA. H19 acts as the Proton acceptor in catalysis. TRNA-binding residues include F64, N66, and N112.

It belongs to the PTH family. Monomer.

It localises to the cytoplasm. It carries out the reaction an N-acyl-L-alpha-aminoacyl-tRNA + H2O = an N-acyl-L-amino acid + a tRNA + H(+). Hydrolyzes ribosome-free peptidyl-tRNAs (with 1 or more amino acids incorporated), which drop off the ribosome during protein synthesis, or as a result of ribosome stalling. In terms of biological role, catalyzes the release of premature peptidyl moieties from peptidyl-tRNA molecules trapped in stalled 50S ribosomal subunits, and thus maintains levels of free tRNAs and 50S ribosomes. This is Peptidyl-tRNA hydrolase from Methylorubrum populi (strain ATCC BAA-705 / NCIMB 13946 / BJ001) (Methylobacterium populi).